A 198-amino-acid chain; its full sequence is Small ribosomal subunit protein uS2 (198 aa).

It belongs to the universal ribosomal protein uS2 family.

The sequence is that of Small ribosomal subunit protein uS2 (rps2) from Methanothermobacter thermautotrophicus (strain ATCC 29096 / DSM 1053 / JCM 10044 / NBRC 100330 / Delta H) (Methanobacterium thermoautotrophicum).